Consider the following 266-residue polypeptide: 5'-nucleotidase SurE (266 aa).

A divalent metal cation contacts are provided by Asp8, Asp9, Ser39, and Asn93.

Belongs to the SurE nucleotidase family. The cofactor is a divalent metal cation.

It localises to the cytoplasm. The enzyme catalyses a ribonucleoside 5'-phosphate + H2O = a ribonucleoside + phosphate. Its function is as follows. Nucleotidase that shows phosphatase activity on nucleoside 5'-monophosphates. The protein is 5'-nucleotidase SurE of Pyrobaculum arsenaticum (strain DSM 13514 / JCM 11321 / PZ6).